The chain runs to 79 residues: Alpha-actitoxin-Ms11a-4 (79 aa).

The signal sequence occupies residues 1 to 23 (MKVLVAVLVFALLMCMFVDIAES). A propeptide spanning residues 24 to 46 (RRRDNPEYPSGLRYDEEMGVFKR) is cleaved from the precursor. 3 disulfide bridges follow: C47/C61, C54/C67, and C60/C76. Residue Y78 is modified to Tyrosine amide.

The protein resides in the secreted. It is found in the nematocyst. Functionally, alpha-toxins act on postsynaptic membranes, they bind to the nicotinic acetylcholine receptors (nAChR) and thus inhibit them. This toxin very weakly competes with alpha-bungarotoxin for binding to orthosteric sites on muscle-type T.carlifornicus (IC(50)=14.95 uM) and human alpha-7/CHRNA7 nAChRs (IC(50)&gt;45 uM). This is Alpha-actitoxin-Ms11a-4 from Metridium senile (Brown sea anemone).